The sequence spans 433 residues: DNA polymerase processivity factor (433 aa).

The interval 274 to 433 (RGDPFDKNYV…VPNTKKQKCG (160 aa)) is disordered. The segment covering 298-307 (SLSSLANAGG) has biased composition (low complexity). Composition is skewed to gly residues over residues 325–336 (GLGGLGGGGGGG) and 344–359 (GGGG…GGGG). Over residues 360-376 (GDHDHGLSSKEKYEQHK) the composition is skewed to basic and acidic residues. Gly residues predominate over residues 385 to 398 (GGSGGGGGGGGGGL).

It belongs to the herpesviridae polymerase accessory protein family. Forms homodimers. Interacts with host SMARCB1. Interacts with host NCL/nucleolin; this interaction is important for the organization of proteins within viral replication compartments. Interacts with UL112/UL113; this interaction is necessary for efficient viral DNA replication. Interacts with UL84. Interacts with the uracil DNA glycosylase UL114. Interacts with the DNA polymerase catalytic subunit UL54. Interacts with host IRF3. Interacts with host RELA. In terms of processing, phosphorylated by UL97 on serine residues, phosphorylation seems important for UL44 nuclear entry but does not directly affect its role in replication. Post-translationally, sumoylated. Sumoylation on Lys-410 increases viral DNA replication.

Its subcellular location is the virion. The protein resides in the host nucleus. In terms of biological role, accessory subunit of the DNA polymerase that plays an essential role in viral DNA replication and acts by increasing the processivity of polymerization. Forms dimers that binds to double-stranded DNA and UL54 specifically to stimulates long chain DNA synthesis efficiently. Plays an important role in maintaining the structure of viral replication compartments by interacting with host nucleolin/NUC. In addition, suppresses innate immune responses through effects on host IRF3 and NF-kappa-B. Mechanistically, interfere with the binding of IRF3 and the p65 NF-kappa-B subunit to the promoters of antiviral genes, thereby inhibiting the expression of these genes. The polypeptide is DNA polymerase processivity factor (UL44) (Human cytomegalovirus (strain Merlin) (HHV-5)).